Reading from the N-terminus, the 217-residue chain is Putative 3-methyladenine DNA glycosylase (217 aa).

The 41-residue stretch at 105–145 (SHNNVYTIDTAKIKSQITDEKTQSIIIRKNRRIMKFYIPNL) folds into the RPE2 insert domain.

Belongs to the DNA glycosylase MPG family.

The chain is Putative 3-methyladenine DNA glycosylase from Rickettsia prowazekii (strain Madrid E).